An 83-amino-acid polypeptide reads, in one-letter code: Short neurotoxin D (83 aa).

Residues 1 to 21 (MKTLLLTLVVVTMVCLDLGYT) form the signal peptide. 4 cysteine pairs are disulfide-bonded: C24–C45, C38–C62, C64–C75, and C76–C81.

Belongs to the three-finger toxin family. Short-chain subfamily. Type I alpha-neurotoxin sub-subfamily. In terms of tissue distribution, expressed by the venom gland.

The protein localises to the secreted. Its function is as follows. Binds to muscle nicotinic acetylcholine receptor (nAChR) and inhibit acetylcholine from binding to the receptor, thereby impairing neuromuscular transmission. The chain is Short neurotoxin D from Laticauda colubrina (Yellow-lipped sea krait).